The primary structure comprises 396 residues: Putative N(4)-(beta-N-acetylglucosaminyl)-L-asparaginase GE19290 (396 aa).

An N-terminal signal peptide occupies residues 1–23 (MKRHLKACLWVLCFASTALSSLA). 2 cysteine pairs are disulfide-bonded: cysteine 100/cysteine 105 and cysteine 199/cysteine 215. The active-site Nucleophile is the threonine 246. Residues 274–277 (RVGD) and 297–300 (TGDG) each bind substrate. Residues cysteine 357 and cysteine 384 are joined by a disulfide bond.

The protein belongs to the Ntn-hydrolase family. Heterotetramer of two alpha and two beta chains arranged as a dimer of alpha/beta heterodimers. Cleaved into an alpha and beta chain by autocatalysis; this activates the enzyme. The N-terminal residue of the beta subunit is responsible for the nucleophile hydrolase activity.

It catalyses the reaction N(4)-(beta-N-acetyl-D-glucosaminyl)-L-asparagine + H2O = N-acetyl-beta-D-glucosaminylamine + L-aspartate + H(+). Its function is as follows. Cleaves the GlcNAc-Asn bond which joins oligosaccharides to the peptide of asparagine-linked glycoproteins. The sequence is that of Putative N(4)-(beta-N-acetylglucosaminyl)-L-asparaginase GE19290 from Drosophila yakuba (Fruit fly).